Consider the following 74-residue polypeptide: RNA-binding protein Hfq (74 aa).

The Sm domain maps to 9–69 (DQFLNQLRKE…ISTFVPQKNV (61 aa)).

This sequence belongs to the Hfq family. As to quaternary structure, homohexamer.

RNA chaperone that binds small regulatory RNA (sRNAs) and mRNAs to facilitate mRNA translational regulation in response to envelope stress, environmental stress and changes in metabolite concentrations. Also binds with high specificity to tRNAs. The sequence is that of RNA-binding protein Hfq from Bacillus cereus (strain Q1).